The chain runs to 200 residues: ATP-dependent Clp protease proteolytic subunit (200 aa).

Catalysis depends on serine 104, which acts as the Nucleophile. Histidine 129 is an active-site residue.

Belongs to the peptidase S14 family. Fourteen ClpP subunits assemble into 2 heptameric rings which stack back to back to give a disk-like structure with a central cavity, resembling the structure of eukaryotic proteasomes.

It is found in the cytoplasm. The catalysed reaction is Hydrolysis of proteins to small peptides in the presence of ATP and magnesium. alpha-casein is the usual test substrate. In the absence of ATP, only oligopeptides shorter than five residues are hydrolyzed (such as succinyl-Leu-Tyr-|-NHMec, and Leu-Tyr-Leu-|-Tyr-Trp, in which cleavage of the -Tyr-|-Leu- and -Tyr-|-Trp bonds also occurs).. Functionally, cleaves peptides in various proteins in a process that requires ATP hydrolysis. Has a chymotrypsin-like activity. Plays a major role in the degradation of misfolded proteins. In Rubrobacter xylanophilus (strain DSM 9941 / JCM 11954 / NBRC 16129 / PRD-1), this protein is ATP-dependent Clp protease proteolytic subunit.